A 299-amino-acid chain; its full sequence is Ribosomal RNA small subunit methyltransferase H (299 aa).

Residues 32–34, D52, F79, D100, and Q107 contribute to the S-adenosyl-L-methionine site; that span reads AGH.

It belongs to the methyltransferase superfamily. RsmH family.

The protein resides in the cytoplasm. It catalyses the reaction cytidine(1402) in 16S rRNA + S-adenosyl-L-methionine = N(4)-methylcytidine(1402) in 16S rRNA + S-adenosyl-L-homocysteine + H(+). Functionally, specifically methylates the N4 position of cytidine in position 1402 (C1402) of 16S rRNA. The chain is Ribosomal RNA small subunit methyltransferase H from Mycoplasmopsis pulmonis (strain UAB CTIP) (Mycoplasma pulmonis).